The following is a 181-amino-acid chain: Ribonuclease M5 (181 aa).

In terms of domain architecture, Toprim spans 3 to 86 (KEVIVVEGRD…AYISQEEGTK (84 aa)). The Mg(2+) site is built by glutamate 9, aspartate 55, and aspartate 57.

The protein belongs to the ribonuclease M5 family. Mg(2+) serves as cofactor.

Its subcellular location is the cytoplasm. The catalysed reaction is Endonucleolytic cleavage of RNA, removing 21 and 42 nucleotides, respectively, from the 5'- and 3'-termini of a 5S-rRNA precursor.. Its function is as follows. Required for correct processing of both the 5' and 3' ends of 5S rRNA precursor. Cleaves both sides of a double-stranded region yielding mature 5S rRNA in one step. In Clostridium botulinum (strain Hall / ATCC 3502 / NCTC 13319 / Type A), this protein is Ribonuclease M5.